The chain runs to 263 residues: 3-methyl-2-oxobutanoate hydroxymethyltransferase (263 aa).

2 residues coordinate Mg(2+): Asp-46 and Asp-85. Residues 46 to 47 (DS), Asp-85, and Lys-115 each bind 3-methyl-2-oxobutanoate. Mg(2+) is bound at residue Glu-117. Glu-180 acts as the Proton acceptor in catalysis.

Belongs to the PanB family. Homodecamer; pentamer of dimers. Mg(2+) is required as a cofactor.

The protein resides in the cytoplasm. The enzyme catalyses 3-methyl-2-oxobutanoate + (6R)-5,10-methylene-5,6,7,8-tetrahydrofolate + H2O = 2-dehydropantoate + (6S)-5,6,7,8-tetrahydrofolate. Its pathway is cofactor biosynthesis; (R)-pantothenate biosynthesis; (R)-pantoate from 3-methyl-2-oxobutanoate: step 1/2. Catalyzes the reversible reaction in which hydroxymethyl group from 5,10-methylenetetrahydrofolate is transferred onto alpha-ketoisovalerate to form ketopantoate. This chain is 3-methyl-2-oxobutanoate hydroxymethyltransferase, found in Corynebacterium diphtheriae (strain ATCC 700971 / NCTC 13129 / Biotype gravis).